A 487-amino-acid polypeptide reads, in one-letter code: MPN domain-containing protein (487 aa).

The tract at residues 1–55 (MAAPESLSPGATAEEAPEEDEDDAEAEDPERGTGSGGRSGSLGGSGGGTAGPGMA) is disordered. N-acetylalanine is present on Ala2. Ser8 is subject to Phosphoserine. Residues 15–28 (EAPEEDEDDAEAED) show a composition bias toward acidic residues. Gly residues predominate over residues 33 to 55 (TGSGGRSGSLGGSGGGTAGPGMA). An RAMA domain is found at 61–156 (TRRAVTLRVL…KYKAAWLRRH (96 aa)). Residues Ser113, Ser115, and Trp135 each contribute to the DNA site. The disordered stretch occupies residues 163–217 (ATADESPTSEGEEEELLLEEEEEDVLAGVSSEDKGHRPPGKGSLEPEATPPGKRM). Phosphoserine is present on residues Ser168 and Ser171. The segment covering 172–187 (EGEEEELLLEEEEEDV) has biased composition (acidic residues). An MPN domain is found at 258-393 (VAVSSNVLFL…PESKICPFWV (136 aa)). His335, His337, and Asp348 together coordinate Zn(2+). The JAMM motif signature appears at 335–348 (HSHPHSPAVPSLQD).

This sequence belongs to the peptidase M67 family. In terms of assembly, monomer. Mainly monomoric, but when binds to dsDNA, forms homotetramer assembled into two homodimers. May interact with histones; this interaction is facilitated by. Post-translationally, degraded following binding to N(6)-methyladenosine methylated DNA (m6A).

Probable protease. Acts as a sensor of N(6)-methyladenosine methylation on DNA (m6A): recognizes and binds m6A DNA, leading to its degradation. Binds only double strand DNA (dsDNA) in a sequence-independent manner. The polypeptide is MPN domain-containing protein (Mus musculus (Mouse)).